Reading from the N-terminus, the 72-residue chain is UPF0270 protein PM1156 (72 aa).

This sequence belongs to the UPF0270 family.

This chain is UPF0270 protein PM1156, found in Pasteurella multocida (strain Pm70).